A 451-amino-acid chain; its full sequence is NADP-specific glutamate dehydrogenase (451 aa).

Lysine 114 is a catalytic residue.

Belongs to the Glu/Leu/Phe/Val dehydrogenases family. As to quaternary structure, homohexamer.

The catalysed reaction is L-glutamate + NADP(+) + H2O = 2-oxoglutarate + NH4(+) + NADPH + H(+). The chain is NADP-specific glutamate dehydrogenase (GDH2) from Fusarium fujikuroi (Bakanae and foot rot disease fungus).